Consider the following 211-residue polypeptide: Thymidylate kinase (211 aa).

Residue 7–14 participates in ATP binding; sequence GIDGCGKT.

It belongs to the thymidylate kinase family.

It carries out the reaction dTMP + ATP = dTDP + ADP. Functionally, phosphorylation of dTMP to form dTDP in both de novo and salvage pathways of dTTP synthesis. In Anaplasma marginale (strain St. Maries), this protein is Thymidylate kinase.